The primary structure comprises 325 residues: DNA repair and recombination protein RadA (325 aa).

ATP is bound at residue 107–114; sequence GEFGSGKT.

Belongs to the eukaryotic RecA-like protein family.

In terms of biological role, involved in DNA repair and in homologous recombination. Binds and assemble on single-stranded DNA to form a nucleoprotein filament. Hydrolyzes ATP in a ssDNA-dependent manner and promotes DNA strand exchange between homologous DNA molecules. This is DNA repair and recombination protein RadA from Methanosarcina acetivorans (strain ATCC 35395 / DSM 2834 / JCM 12185 / C2A).